Consider the following 123-residue polypeptide: Fluoride-specific ion channel FluC (123 aa).

4 helical membrane passes run 7–27 (VAIA…SGIL), 39–59 (LVNS…FWGI), 68–88 (FFGT…YETF), and 100–120 (ALNI…GFIL). The Na(+) site is built by glycine 75 and serine 78.

The protein belongs to the fluoride channel Fluc/FEX (TC 1.A.43) family.

It localises to the cell membrane. It carries out the reaction fluoride(in) = fluoride(out). With respect to regulation, na(+) is not transported, but it plays an essential structural role and its presence is essential for fluoride channel function. In terms of biological role, fluoride-specific ion channel. Important for reducing fluoride concentration in the cell, thus reducing its toxicity. The chain is Fluoride-specific ion channel FluC from Thermococcus onnurineus (strain NA1).